Reading from the N-terminus, the 257-residue chain is Tryptophan synthase alpha chain (257 aa).

Residues glutamate 47 and aspartate 58 each act as proton acceptor in the active site.

The protein belongs to the TrpA family. In terms of assembly, tetramer of two alpha and two beta chains.

It carries out the reaction (1S,2R)-1-C-(indol-3-yl)glycerol 3-phosphate + L-serine = D-glyceraldehyde 3-phosphate + L-tryptophan + H2O. Its pathway is amino-acid biosynthesis; L-tryptophan biosynthesis; L-tryptophan from chorismate: step 5/5. Its function is as follows. The alpha subunit is responsible for the aldol cleavage of indoleglycerol phosphate to indole and glyceraldehyde 3-phosphate. In Listeria innocua serovar 6a (strain ATCC BAA-680 / CLIP 11262), this protein is Tryptophan synthase alpha chain.